The following is a 348-amino-acid chain: MTVQPQTLKIRRPDDWHIHLRDDEMLSTVLPYTSEVFARAIVMPNLTPPITTVASAIAYRERILAAIPAGHKFTPLMTCYLTNTLDVNELTRGFEQGVFTAAKLYPANATTNSTHGVSDIPAIYPLFEQMQKIGMPLLIHGEVTDAAVDIFDREARFIDQILEPIRRQFPELKIVFEHITTKDAADYVLAGNPFLGATITPQHLMFNRNHMLVGGIRPHLFCLPILKRSTHQDALRQAVASGSDRFFLGTDSAPHTKHRKESSCGCAGVFNAPSALPAYASVFEEMNALQHLEAFCSLNGPRFYGLPVNEDFVELVRVPFQQPEEISLGNESIIPFLAGQTINWSVKA.

Residues H17 and H19 each contribute to the Zn(2+) site. Substrate-binding positions include 19 to 21 (HLR) and N45. Zn(2+) contacts are provided by K103, H140, and H178. An N6-carboxylysine modification is found at K103. Position 140 (H140) interacts with substrate. L223 contacts substrate. Zn(2+) is bound at residue D251. The active site involves D251. Substrate-binding residues include H255 and A267.

The protein belongs to the metallo-dependent hydrolases superfamily. DHOase family. Class II DHOase subfamily. Homodimer. Zn(2+) is required as a cofactor.

The enzyme catalyses (S)-dihydroorotate + H2O = N-carbamoyl-L-aspartate + H(+). It participates in pyrimidine metabolism; UMP biosynthesis via de novo pathway; (S)-dihydroorotate from bicarbonate: step 3/3. In terms of biological role, catalyzes the reversible cyclization of carbamoyl aspartate to dihydroorotate. The protein is Dihydroorotase of Yersinia enterocolitica serotype O:8 / biotype 1B (strain NCTC 13174 / 8081).